Consider the following 336-residue polypeptide: Aspartate--ammonia ligase (336 aa).

It belongs to the class-II aminoacyl-tRNA synthetase family. AsnA subfamily.

The protein localises to the cytoplasm. The enzyme catalyses L-aspartate + NH4(+) + ATP = L-asparagine + AMP + diphosphate + H(+). It functions in the pathway amino-acid biosynthesis; L-asparagine biosynthesis; L-asparagine from L-aspartate (ammonia route): step 1/1. This is Aspartate--ammonia ligase from Ruminiclostridium cellulolyticum (strain ATCC 35319 / DSM 5812 / JCM 6584 / H10) (Clostridium cellulolyticum).